We begin with the raw amino-acid sequence, 225 residues long: Techylectin-like protein (225 aa).

A Fibrinogen C-terminal domain is found at 32–225 (CPSPPLPIDC…WTEIKIKDVK (194 aa)). A disulfide bond links C41 and C60. The short motif at 75-77 (RGD) is the Cell attachment site element. The Ca(2+) site is built by D164 and T170. Cysteines 172 and 185 form a disulfide.

As to expression, expressed by the venom gland.

It localises to the secreted. Lectin involved in innate immunity. The chain is Techylectin-like protein from Phoneutria nigriventer (Brazilian armed spider).